Here is a 117-residue protein sequence, read N- to C-terminus: Hemerythrin subunit beta (117 aa).

The Fe cation site is built by His-24, His-53, Glu-57, His-72, His-76, His-105, and Asp-110.

Belongs to the hemerythrin family. As to quaternary structure, octamer composed of two types of chains: alpha and beta.

Hemerythrin is a respiratory protein in blood cells of certain marine worms. The oxygen-binding site in each chain contains two iron atoms. The protein is Hemerythrin subunit beta of Lingula anatina (Brachiopod).